Here is a 493-residue protein sequence, read N- to C-terminus: Rop guanine nucleotide exchange factor 10 (493 aa).

Disordered stretches follow at residues 1–45 and 400–423; these read MFDG…RSDM and GEAE…VVAA. Residues 17–27 show a composition bias toward basic and acidic residues; sequence DGMHTPEHELA. The region spanning 35–401 is the PRONE domain; that stretch reads RRGKQNRRSD…RLVQRQLMGE (367 aa).

Functionally, guanine-nucleotide exchange factor (GEF) that acts as an activator of Rop (Rho of plants) GTPases by promoting the exchange of GDP for GTP. This chain is Rop guanine nucleotide exchange factor 10 (ROPGEF10), found in Arabidopsis thaliana (Mouse-ear cress).